A 440-amino-acid polypeptide reads, in one-letter code: L-gulonolactone oxidase (440 aa).

One can recognise an FAD-binding PCMH-type domain in the interval 17–187 (YGCSPEMYYQ…LTVTLQCVPQ (171 aa)). H54 is modified (pros-8alpha-FAD histidine). The chain crosses the membrane as a helical span at residues 251–273 (IGFYLLEFLLWTSTYLPRLVGWI).

It belongs to the oxygen-dependent FAD-linked oxidoreductase family. It depends on FAD as a cofactor. In terms of tissue distribution, highly expressed in liver.

It localises to the microsome membrane. The protein localises to the endoplasmic reticulum membrane. The catalysed reaction is L-gulono-1,4-lactone + O2 = L-ascorbate + H2O2 + H(+). Its pathway is cofactor biosynthesis; L-ascorbate biosynthesis via UDP-alpha-D-glucuronate pathway; L-ascorbate from UDP-alpha-D-glucuronate: step 4/4. Its function is as follows. Oxidizes L-gulono-1,4-lactone to hydrogen peroxide and L-xylo-hexulonolactone which spontaneously isomerizes to L-ascorbate. The sequence is that of L-gulonolactone oxidase (Gulo) from Mus musculus (Mouse).